The sequence spans 134 residues: Large ribosomal subunit protein eL14y (134 aa).

The protein belongs to the eukaryotic ribosomal protein eL14 family.

The protein is Large ribosomal subunit protein eL14y (RPL14B) of Arabidopsis thaliana (Mouse-ear cress).